A 388-amino-acid polypeptide reads, in one-letter code: Type II secretion system protein F (388 aa).

The tract at residues 1-28 (MTEGDSARQVRQQLREQGLTPLEVNETT) is disordered. Topologically, residues 1-153 (MTEGDSARQV…HMRTKLLQAM (153 aa)) are cytoplasmic. Ca(2+) contacts are provided by Glu-79, Asn-133, and Asp-137. A helical membrane pass occupies residues 154–174 (IYPIVLTLVAVGVISILLTAV). The Periplasmic portion of the chain corresponds to 175–205 (VPKVVAQFEHMGQQLPATTRFLIGTSELMQH). Residues 206–226 (YGLWFLLLLFIGGFVWRWWLT) form a helical membrane-spanning segment. Topologically, residues 227-350 (DEKRRRHWHQ…QDREFETQVN (124 aa)) are cytoplasmic. A helical membrane pass occupies residues 351–371 (IALGVFEPLLVVSMAGVVLFI). Residues 372–388 (VMSILQPILELNNMVNL) are Periplasmic-facing.

Belongs to the GSP F family. As to quaternary structure, type II secretion system is composed of four main components: the outer membrane complex, the inner membrane complex, the cytoplasmic secretion ATPase and the periplasm-spanning pseudopilus. Homodimer. Interacts with ExeE and ExeL components.

The protein localises to the cell inner membrane. Component of the type II secretion system inner membrane complex required for the energy-dependent secretion of extracellular factors such as proteases and toxins from the periplasm. In Aeromonas hydrophila, this protein is Type II secretion system protein F (exeF).